We begin with the raw amino-acid sequence, 309 residues long: MAGNSRRRGAVRKAGTKKGPTVGSGGQRRRGLEGRGPTPPAHLRPNHPAAKRAQSPPRRPAKRTEETETVLGRNPVLECLRAGVPATALYVALGTEADERLTESVSRAADSGISILEVPRADLDRMTGNHLHQGIALQVPPYIYAHPDDLLEAAAGSPPALLVALDNISDPRNLGAIVRSVAAFGGHGVLIPQRRSASVTAVAWRTSAGAAARIPVARATNLTRTLQDWADRGLRVIGLDAGGDTTLDDLDGSDPLVVVVGSEGKGLSRLVRQNCDEVVSIPMAGSAESLNASVAAGVVLAEISRQRRG.

The span at 1–16 shows a compositional bias: basic residues; it reads MAGNSRRRGAVRKAGT. The disordered stretch occupies residues 1–70; the sequence is MAGNSRRRGA…AKRTEETETV (70 aa). S-adenosyl-L-methionine-binding residues include G261, I281, and L290.

It belongs to the class IV-like SAM-binding methyltransferase superfamily. RNA methyltransferase TrmH family.

This is an uncharacterized protein from Mycobacterium avium (strain 104).